A 387-amino-acid chain; its full sequence is Proteinase R (387 aa).

Positions 1–21 are cleaved as a signal peptide; sequence MRLSILLGLLPLAPRPPAVDA. Residues 22 to 108 constitute a propeptide that is removed on maturation; that stretch reads VEQRSEPAPL…IEQDAIVNIN (87 aa). Positions 42 to 107 constitute an Inhibitor I9 domain; sequence KYIVKLKEGS…YIEQDAIVNI (66 aa). In terms of domain architecture, Peptidase S8 spans 115–387; it reads PWGLARISST…NLLAYNNYQG (273 aa). T124 contacts Ca(2+). 2 cysteine pairs are disulfide-bonded: C142-C231 and C286-C357. Residues D147 and H177 each act as charge relay system in the active site. D308 serves as a coordination point for Ca(2+). S332 acts as the Charge relay system in catalysis. D368 lines the Ca(2+) pocket.

It belongs to the peptidase S8 family. Requires Ca(2+) as cofactor.

Serine proteinase. The polypeptide is Proteinase R (PROR) (Parengyodontium album (Tritirachium album)).